The following is a 596-amino-acid chain: Elongation factor 4 (596 aa).

The region spanning 2-184 (KHIRNFSIIA…VIVAKIPPPE (183 aa)) is the tr-type G domain. GTP contacts are provided by residues 14–19 (DHGKST) and 131–134 (NKID).

Belongs to the TRAFAC class translation factor GTPase superfamily. Classic translation factor GTPase family. LepA subfamily.

The protein localises to the cell inner membrane. It catalyses the reaction GTP + H2O = GDP + phosphate + H(+). Its function is as follows. Required for accurate and efficient protein synthesis under certain stress conditions. May act as a fidelity factor of the translation reaction, by catalyzing a one-codon backward translocation of tRNAs on improperly translocated ribosomes. Back-translocation proceeds from a post-translocation (POST) complex to a pre-translocation (PRE) complex, thus giving elongation factor G a second chance to translocate the tRNAs correctly. Binds to ribosomes in a GTP-dependent manner. The protein is Elongation factor 4 of Shewanella putrefaciens (strain CN-32 / ATCC BAA-453).